The sequence spans 419 residues: Transcription termination factor Rho (419 aa).

One can recognise a Rho RNA-BD domain in the interval 48 to 123; that stretch reads EISGDGVLEI…LKVDSINFDR (76 aa). RNA-binding regions lie at residues 61 to 66, 78 to 80, and 108 to 110; these read GFGFLR, DIY, and ERY. ATP is bound by residues 169 to 174, 181 to 186, and R212; these read GKGQRG and KAGKTI. The segment at 284-288 is RNA-binding 2; it reads VLTGG.

Belongs to the Rho family. As to quaternary structure, homohexamer. The homohexamer assembles into an open ring structure.

Functionally, facilitates transcription termination by a mechanism that involves Rho binding to the nascent RNA, activation of Rho's RNA-dependent ATPase activity, and release of the mRNA from the DNA template. The chain is Transcription termination factor Rho from Pseudomonas aeruginosa (strain ATCC 15692 / DSM 22644 / CIP 104116 / JCM 14847 / LMG 12228 / 1C / PRS 101 / PAO1).